The following is a 70-amino-acid chain: Small ribosomal subunit protein bS21 (70 aa).

This sequence belongs to the bacterial ribosomal protein bS21 family.

This Helicobacter pylori (strain P12) protein is Small ribosomal subunit protein bS21.